Consider the following 200-residue polypeptide: Glycerol-3-phosphate acyltransferase (200 aa).

Helical transmembrane passes span 4–24 (FALC…AVIV), 53–73 (WAAL…VWCG), 80–100 (QFEL…PIFF), 115–135 (IAPI…LVFV), and 138–158 (GYSS…VWWF).

Belongs to the PlsY family. As to quaternary structure, probably interacts with PlsX.

Its subcellular location is the cell inner membrane. It catalyses the reaction an acyl phosphate + sn-glycerol 3-phosphate = a 1-acyl-sn-glycero-3-phosphate + phosphate. Its pathway is lipid metabolism; phospholipid metabolism. Catalyzes the transfer of an acyl group from acyl-phosphate (acyl-PO(4)) to glycerol-3-phosphate (G3P) to form lysophosphatidic acid (LPA). This enzyme utilizes acyl-phosphate as fatty acyl donor, but not acyl-CoA or acyl-ACP. The protein is Glycerol-3-phosphate acyltransferase of Actinobacillus succinogenes (strain ATCC 55618 / DSM 22257 / CCUG 43843 / 130Z).